Consider the following 396-residue polypeptide: Aspartate aminotransferase (396 aa).

L-aspartate is bound by residues glycine 34, tryptophan 130, and asparagine 183. An N6-(pyridoxal phosphate)lysine modification is found at lysine 246. Arginine 374 is a binding site for L-aspartate.

The protein belongs to the class-I pyridoxal-phosphate-dependent aminotransferase family. As to quaternary structure, homodimer. It depends on pyridoxal 5'-phosphate as a cofactor.

The protein localises to the cytoplasm. It carries out the reaction L-aspartate + 2-oxoglutarate = oxaloacetate + L-glutamate. The sequence is that of Aspartate aminotransferase (aspC) from Escherichia coli (strain K12).